Reading from the N-terminus, the 342-residue chain is Ribosomal RNA small subunit methyltransferase C (342 aa).

Belongs to the methyltransferase superfamily. RsmC family. Monomer.

It localises to the cytoplasm. It catalyses the reaction guanosine(1207) in 16S rRNA + S-adenosyl-L-methionine = N(2)-methylguanosine(1207) in 16S rRNA + S-adenosyl-L-homocysteine + H(+). In terms of biological role, specifically methylates the guanine in position 1207 of 16S rRNA in the 30S particle. The sequence is that of Ribosomal RNA small subunit methyltransferase C from Salmonella choleraesuis (strain SC-B67).